We begin with the raw amino-acid sequence, 79 residues long: Small ribosomal subunit protein uS17 (79 aa).

The protein belongs to the universal ribosomal protein uS17 family. As to quaternary structure, part of the 30S ribosomal subunit.

One of the primary rRNA binding proteins, it binds specifically to the 5'-end of 16S ribosomal RNA. This is Small ribosomal subunit protein uS17 from Rhizobium etli (strain CIAT 652).